A 218-amino-acid polypeptide reads, in one-letter code: Adenylate kinase (218 aa).

Position 10-15 (10-15 (GAGKGT)) interacts with ATP. Residues 30–59 (STGDMLRAAINEGTPLGLEAKKVMDAGKLV) are NMP. AMP contacts are provided by residues Thr31, Arg36, 57-59 (KLV), 85-88 (GFPR), and Gln92. The tract at residues 122-159 (GRRVHPASGRTYHVLFNPPAKEGVDDITGDPLVQREDD) is LID. ATP-binding positions include Arg123 and 132-133 (TY). AMP is bound by residues Arg156 and Arg167. Gly203 is a binding site for ATP.

Belongs to the adenylate kinase family. Monomer.

It is found in the cytoplasm. The enzyme catalyses AMP + ATP = 2 ADP. It functions in the pathway purine metabolism; AMP biosynthesis via salvage pathway; AMP from ADP: step 1/1. Its function is as follows. Catalyzes the reversible transfer of the terminal phosphate group between ATP and AMP. Plays an important role in cellular energy homeostasis and in adenine nucleotide metabolism. This Chlorobium phaeobacteroides (strain BS1) protein is Adenylate kinase.